Consider the following 653-residue polypeptide: Modification methylase StsI (653 aa).

This sequence belongs to the N(4)/N(6)-methyltransferase family. As to quaternary structure, monomer.

The enzyme catalyses a 2'-deoxyadenosine in DNA + S-adenosyl-L-methionine = an N(6)-methyl-2'-deoxyadenosine in DNA + S-adenosyl-L-homocysteine + H(+). An alpha subtype methylase that recognizes the double-stranded sequence 5'-GGATG-3' in one strand and 3'-CATCC-5' in the other, methylates A of both strands, and protects the DNA from cleavage by the StsI endonuclease. The 2 domains of the protein participate in modification of the two strands. This Streptococcus sanguinis protein is Modification methylase StsI (stsIM).